The following is a 279-amino-acid chain: Urease accessory protein UreD (279 aa).

It belongs to the UreD family. As to quaternary structure, ureD, UreF and UreG form a complex that acts as a GTP-hydrolysis-dependent molecular chaperone, activating the urease apoprotein by helping to assemble the nickel containing metallocenter of UreC. The UreE protein probably delivers the nickel.

Its subcellular location is the cytoplasm. Required for maturation of urease via the functional incorporation of the urease nickel metallocenter. The polypeptide is Urease accessory protein UreD (Streptococcus thermophilus (strain ATCC BAA-250 / LMG 18311)).